The sequence spans 315 residues: Thymidylate synthase (315 aa).

Residues Arg-29 and 156–157 (RR) each bind dUMP. Cys-176 functions as the Nucleophile in the catalytic mechanism. Residues 213-216 (RSCD), Asn-224, and 254-256 (HVY) each bind dUMP. Asp-216 is a binding site for (6R)-5,10-methylene-5,6,7,8-tetrahydrofolate.

This sequence belongs to the thymidylate synthase family. In terms of assembly, homodimer.

It carries out the reaction dUMP + (6R)-5,10-methylene-5,6,7,8-tetrahydrofolate = 7,8-dihydrofolate + dTMP. The protein operates within pyrimidine metabolism; dTTP biosynthesis. This chain is Thymidylate synthase (TMP1), found in Candida albicans (strain SC5314 / ATCC MYA-2876) (Yeast).